The primary structure comprises 1095 residues: Formin-like protein 2 (1095 aa).

The GBD/FH3 domain maps to 23–469 (LPMPEPGELE…EAIQRQSTLE (447 aa)). Residues 381-478 (LLEDAETKNA…EKKIHELEKQ (98 aa)) are a coiled coil. Positions 521-602 (PSSGPLPPPP…PSAPPLPGTS (82 aa)) are disordered. Pro residues-rich tracts occupy residues 524–534 (GPLPPPPPPLP), 548–576 (ATPP…PLPG), and 583–599 (PAPP…PPLP). The region spanning 617-1008 (IKKPIKTKFR…LMEKLLEQEA (392 aa)) is the FH2 domain.

The protein belongs to the formin homology family. In terms of assembly, interacts with TCP11L2; this interaction promotes muscle-derived satellite cell (MDSC) migration and differentiation.

The protein resides in the cytoplasm. Functionally, plays a role in the regulation of cell morphology and cytoskeletal organization. Required in the cortical actin filament dynamics. This is Formin-like protein 2 from Bos taurus (Bovine).